The chain runs to 253 residues: MTQEKKDFTIHALPVLKDNIIWIWEASGQAVVVDPAVSEPVKEFLSQNNLALNSVLQTHHHDDHIGGTRDLISNWPSASIIACKTDLERIPFQTHSVTDQEVFTLFGYSVKVLEVPGHTRGHVAYYLSDTNADNRNPALFCGDTLFAGGCGRLFEGTPHEMFKSLKLLNSLPSNTKIYCAHEYTESNLHWANHLYPEDLLIKKRLEYVSSQRANGLLSLPSTIAEERKTNLFFRARTLEQFSQFRKHKDNWMS.

Residues H59, H61, D63, H64, H118, D143, and H181 each contribute to the Zn(2+) site.

This sequence belongs to the metallo-beta-lactamase superfamily. Glyoxalase II family. In terms of assembly, monomer. Zn(2+) is required as a cofactor.

It catalyses the reaction an S-(2-hydroxyacyl)glutathione + H2O = a 2-hydroxy carboxylate + glutathione + H(+). The protein operates within secondary metabolite metabolism; methylglyoxal degradation; (R)-lactate from methylglyoxal: step 2/2. Thiolesterase that catalyzes the hydrolysis of S-D-lactoyl-glutathione to form glutathione and D-lactic acid. This Prochlorococcus marinus (strain MIT 9211) protein is Hydroxyacylglutathione hydrolase.